The chain runs to 219 residues: Proteasome subunit beta type-9 (219 aa).

The propeptide at 1–20 is removed in mature form; sequence MLRAGAPTAGSFRTEEVHTG. Catalysis depends on Thr21, which acts as the Nucleophile. 2 positions are modified to N6-acetyllysine: Lys53 and Lys109.

Belongs to the peptidase T1B family. As to quaternary structure, the 26S proteasome consists of a 20S proteasome core and two 19S regulatory subunits. The 20S proteasome core is composed of 28 subunits that are arranged in four stacked rings, resulting in a barrel-shaped structure. The two end rings are each formed by seven alpha subunits, and the two central rings are each formed by seven beta subunits. The catalytic chamber with the active sites is on the inside of the barrel. Component of the immunoproteasome, where it displaces the equivalent housekeeping subunit PSMB6. Component of the spermatoproteasome, a form of the proteasome specifically found in testis. In terms of processing, autocleaved. The resulting N-terminal Thr residue of the mature subunit is responsible for the nucleophile proteolytic activity.

It is found in the cytoplasm. Its subcellular location is the nucleus. The catalysed reaction is Cleavage of peptide bonds with very broad specificity.. Its function is as follows. The proteasome is a multicatalytic proteinase complex which is characterized by its ability to cleave peptides with Arg, Phe, Tyr, Leu, and Glu adjacent to the leaving group at neutral or slightly basic pH. The proteasome has an ATP-dependent proteolytic activity. This subunit is involved in antigen processing to generate class I binding peptides. The protein is Proteasome subunit beta type-9 (Psmb9) of Mus spicilegus (Steppe mouse).